We begin with the raw amino-acid sequence, 393 residues long: S-adenosylmethionine synthase (393 aa).

Residue His16 coordinates ATP. Asp18 is a binding site for Mg(2+). Glu44 contributes to the K(+) binding site. 2 residues coordinate L-methionine: Glu57 and Gln100. The interval 100 to 110 is flexible loop; the sequence is QSNDIAQGVDH. Residues 167 to 169, 238 to 239, Asp247, 253 to 254, Ala270, and Lys274 each bind ATP; these read DAK, RF, and RK. L-methionine is bound at residue Asp247. Lys278 provides a ligand contact to L-methionine.

This sequence belongs to the AdoMet synthase family. In terms of assembly, homotetramer; dimer of dimers. The cofactor is Mg(2+). Requires K(+) as cofactor.

The protein localises to the cytoplasm. It carries out the reaction L-methionine + ATP + H2O = S-adenosyl-L-methionine + phosphate + diphosphate. Its pathway is amino-acid biosynthesis; S-adenosyl-L-methionine biosynthesis; S-adenosyl-L-methionine from L-methionine: step 1/1. Catalyzes the formation of S-adenosylmethionine (AdoMet) from methionine and ATP. The overall synthetic reaction is composed of two sequential steps, AdoMet formation and the subsequent tripolyphosphate hydrolysis which occurs prior to release of AdoMet from the enzyme. This Polaromonas sp. (strain JS666 / ATCC BAA-500) protein is S-adenosylmethionine synthase.